Here is a 166-residue protein sequence, read N- to C-terminus: Large ribosomal subunit protein bL9 (166 aa).

The protein belongs to the bacterial ribosomal protein bL9 family.

Functionally, binds to the 23S rRNA. This Psychrobacter arcticus (strain DSM 17307 / VKM B-2377 / 273-4) protein is Large ribosomal subunit protein bL9.